Here is a 413-residue protein sequence, read N- to C-terminus: Monacolin J acid methylbutanoyltransferase (413 aa).

A monacolin J-binding site is contributed by Arg73. Ser76 serves as the catalytic Acyl-ester intermediate. Monacolin J contacts are provided by Arg173, Tyr188, and Tyr258. Gly366 contributes to the 2-methylbutanoate binding site. Monacolin J-binding residues include Glu388 and Trp390.

This sequence belongs to the class-A beta-lactamase family. Interacts with LovF.

It carries out the reaction monacolin J carboxylate + (S)-2-methylbutanoyl-[2-methylbutanoate polyketide synthase] = lovastatin carboxylate + holo-[2-methylbutanoate polyketide synthase]. It participates in polyketide biosynthesis; lovastatin biosynthesis. In terms of biological role, monacolin J acid methylbutanoyltransferase; part of the gene cluster that mediates the biosynthesis of lovastatin (also known as mevinolin, mevacor or monacolin K), a hypolipidemic inhibitor of (3S)-hydroxymethylglutaryl-coenzyme A (HMG-CoA) reductase (HMGR). The first step in the biosynthesis of lovastatin is the production of dihydromonacolin L acid by the lovastatin nonaketide synthase lovB and the trans-acting enoyl reductase lovC via condensation of one acetyl-CoA unit and 8 malonyl-CoA units. Dihydromonacolin L acid is released from lovB by the thioesterase lovG. Next, dihydromonacolin L acid is oxidized by the dihydromonacolin L monooxygenase lovA twice to form monacolin J acid. The 2-methylbutyrate moiety of lovastatin is synthesized by the lovastatin diketide synthase lovF via condensation of one acetyl-CoA unit and one malonyl-CoA unit. Finally, the covalent attachment of this moiety to monacolin J acid is catalyzed by the transesterase lovD to yield lovastatin. LovD has broad substrate specificity and can also convert monacolin J to simvastatin using alpha-dimethylbutanoyl-S-methyl-3-mercaptopropionate (DMB-S-MMP) as the thioester acyl donor, and can also catalyze the reverse reaction and function as hydrolase in vitro. LovD has much higher activity with LovF-bound 2-methylbutanoate than with free diketide substrates. This chain is Monacolin J acid methylbutanoyltransferase, found in Aspergillus terreus.